The chain runs to 387 residues: Lipid-A-disaccharide synthase (387 aa).

It belongs to the LpxB family.

It carries out the reaction a lipid X + a UDP-2-N,3-O-bis[(3R)-3-hydroxyacyl]-alpha-D-glucosamine = a lipid A disaccharide + UDP + H(+). It participates in bacterial outer membrane biogenesis; LPS lipid A biosynthesis. In terms of biological role, condensation of UDP-2,3-diacylglucosamine and 2,3-diacylglucosamine-1-phosphate to form lipid A disaccharide, a precursor of lipid A, a phosphorylated glycolipid that anchors the lipopolysaccharide to the outer membrane of the cell. The sequence is that of Lipid-A-disaccharide synthase from Glaesserella parasuis serovar 5 (strain SH0165) (Haemophilus parasuis).